Here is a 103-residue protein sequence, read N- to C-terminus: Sperm-associated antigen 11A (103 aa).

The N-terminal stretch at 1–24 (MRQRLLPSVTSLLLVALLFPGSSQ) is a signal peptide. Asn-29 is a glycosylation site (N-linked (GlcNAc...) asparagine).

This sequence belongs to the SPAG11 family.

The protein resides in the secreted. Has antimicrobial activity against E.coli. Plays a role in the defense response in the male reproductive tract, contributing to sperm maturation, storage and protection. In Pan troglodytes (Chimpanzee), this protein is Sperm-associated antigen 11A.